Here is a 241-residue protein sequence, read N- to C-terminus: tRNA (guanine-N(7)-)-methyltransferase (241 aa).

The S-adenosyl-L-methionine site is built by E71, E96, D123, and D146. The active site involves D146. Substrate-binding positions include K150, D182, and 219–222 (TKFE).

The protein belongs to the class I-like SAM-binding methyltransferase superfamily. TrmB family.

It carries out the reaction guanosine(46) in tRNA + S-adenosyl-L-methionine = N(7)-methylguanosine(46) in tRNA + S-adenosyl-L-homocysteine. It functions in the pathway tRNA modification; N(7)-methylguanine-tRNA biosynthesis. Functionally, catalyzes the formation of N(7)-methylguanine at position 46 (m7G46) in tRNA. The polypeptide is tRNA (guanine-N(7)-)-methyltransferase (Pseudoalteromonas translucida (strain TAC 125)).